A 278-amino-acid chain; its full sequence is Large ribosomal subunit protein uL2 (278 aa).

Residues 223-278 (GVAMNPIDHPHGGGEGRTSGGRHPVTPWGFPTKGKKTRSNKRTDTFIVSSRHNRKK) are disordered.

Belongs to the universal ribosomal protein uL2 family. Part of the 50S ribosomal subunit. Forms a bridge to the 30S subunit in the 70S ribosome.

One of the primary rRNA binding proteins. Required for association of the 30S and 50S subunits to form the 70S ribosome, for tRNA binding and peptide bond formation. It has been suggested to have peptidyltransferase activity; this is somewhat controversial. Makes several contacts with the 16S rRNA in the 70S ribosome. This is Large ribosomal subunit protein uL2 from Methylobacterium nodulans (strain LMG 21967 / CNCM I-2342 / ORS 2060).